The following is a 473-amino-acid chain: Xylosidase/arabinosidase (473 aa).

The active-site Proton acceptor is aspartate 18. The Proton donor role is filled by glutamate 209.

It belongs to the glycosyl hydrolase 43 family. As to quaternary structure, homotetramer.

It catalyses the reaction Hydrolysis of (1-&gt;4)-beta-D-xylans, to remove successive D-xylose residues from the non-reducing termini.. The catalysed reaction is Hydrolysis of terminal non-reducing alpha-L-arabinofuranoside residues in alpha-L-arabinosides.. This chain is Xylosidase/arabinosidase (xylA), found in Thermoclostridium stercorarium (Clostridium stercorarium).